The chain runs to 175 residues: Peptide deformylase (175 aa).

Fe cation contacts are provided by cysteine 96 and histidine 138. Glutamate 139 is a catalytic residue. Histidine 142 contacts Fe cation.

It belongs to the polypeptide deformylase family. It depends on Fe(2+) as a cofactor.

It catalyses the reaction N-terminal N-formyl-L-methionyl-[peptide] + H2O = N-terminal L-methionyl-[peptide] + formate. Removes the formyl group from the N-terminal Met of newly synthesized proteins. Requires at least a dipeptide for an efficient rate of reaction. N-terminal L-methionine is a prerequisite for activity but the enzyme has broad specificity at other positions. In Rhodopseudomonas palustris (strain ATCC BAA-98 / CGA009), this protein is Peptide deformylase.